We begin with the raw amino-acid sequence, 580 residues long: Glutamine--tRNA ligase (580 aa).

The 'HIGH' region signature appears at 51–61; it reads PEPNGYLHIGH. Residues 52-54 and 58-64 each bind ATP; these read EPN and HIGHAKS. The L-glutamine site is built by Asp-84 and Tyr-233. ATP is bound by residues Thr-252 and 287–288; that span reads RL. Residues 294–298 carry the 'KMSKS' region motif; that stretch reads ITSKR.

It belongs to the class-I aminoacyl-tRNA synthetase family. In terms of assembly, monomer.

It is found in the cytoplasm. The enzyme catalyses tRNA(Gln) + L-glutamine + ATP = L-glutaminyl-tRNA(Gln) + AMP + diphosphate. In Ralstonia nicotianae (strain ATCC BAA-1114 / GMI1000) (Ralstonia solanacearum), this protein is Glutamine--tRNA ligase.